The primary structure comprises 406 residues: Aminomethyltransferase, mitochondrial (406 aa).

The transit peptide at 1-29 (MRGGLWQLGQSITRRLAQADKKTIGRRCF) directs the protein to the mitochondrion. Glu-234, Arg-265, and Tyr-403 together coordinate substrate.

This sequence belongs to the GcvT family. As to quaternary structure, the glycine cleavage system is composed of four proteins: P, T, L and H.

Its subcellular location is the mitochondrion. The catalysed reaction is N(6)-[(R)-S(8)-aminomethyldihydrolipoyl]-L-lysyl-[protein] + (6S)-5,6,7,8-tetrahydrofolate = N(6)-[(R)-dihydrolipoyl]-L-lysyl-[protein] + (6R)-5,10-methylene-5,6,7,8-tetrahydrofolate + NH4(+). Its function is as follows. The glycine cleavage system catalyzes the degradation of glycine. In Solanum tuberosum (Potato), this protein is Aminomethyltransferase, mitochondrial (GDCST).